The sequence spans 933 residues: 2-oxoglutarate dehydrogenase E1 component (933 aa).

Belongs to the alpha-ketoglutarate dehydrogenase family. Homodimer. Part of the 2-oxoglutarate dehydrogenase (OGDH) complex composed of E1 (2-oxoglutarate dehydrogenase), E2 (dihydrolipoamide succinyltransferase) and E3 (dihydrolipoamide dehydrogenase); the complex contains multiple copies of the three enzymatic components (E1, E2 and E3). Thiamine diphosphate serves as cofactor.

The enzyme catalyses N(6)-[(R)-lipoyl]-L-lysyl-[protein] + 2-oxoglutarate + H(+) = N(6)-[(R)-S(8)-succinyldihydrolipoyl]-L-lysyl-[protein] + CO2. In terms of biological role, E1 component of the 2-oxoglutarate dehydrogenase (OGDH) complex which catalyzes the decarboxylation of 2-oxoglutarate, the first step in the conversion of 2-oxoglutarate to succinyl-CoA and CO(2). This Rickettsia typhi (strain ATCC VR-144 / Wilmington) protein is 2-oxoglutarate dehydrogenase E1 component (sucA).